The sequence spans 661 residues: Coagulation factor XIII B chain (661 aa).

A signal peptide spans 1–20 (MRLKNLTFIIILIISGELYA). 10 Sushi domains span residues 24–88 (PCGF…PRCF), 89–148 (KKCT…TCRK), 151–210 (ETCL…KCTK), 211–269 (LKCS…VCEG), 272–329 (NRCP…KCIE), 334–391 (VACE…ECVE), 394–452 (ENCK…VCLE), 453–516 (PCTV…PLCT), 522–580 (GMCT…LCLE), and 581–647 (PCTL…PRCI). 20 disulfide bridges follow: C25–C76, C59–C87, C91–C135, C118–C146, C153–C197, C180–C208, C213–C255, C241–C267, C274–C316, C302–C327, C336–C378, C364–C389, C396–C439, C425–C450, C454–C505, C486–C515, C524–C567, C553–C578, C582–C636, and C616–C646. An N-linked (GlcNAc...) asparagine glycan is attached at N162. N545 carries N-linked (GlcNAc...) asparagine glycosylation. Positions 617 to 619 (RGD) match the Cell attachment site motif.

As to quaternary structure, tetramer of two A chains (F13A1) and two B (F13B) chains.

Its subcellular location is the secreted. Functionally, the B chain of factor XIII is not catalytically active, but is thought to stabilize the A subunits and regulate the rate of transglutaminase formation by thrombin. This Homo sapiens (Human) protein is Coagulation factor XIII B chain (F13B).